The primary structure comprises 182 residues: Oligoribonuclease (182 aa).

In terms of domain architecture, Exonuclease spans 8 to 171 (LLWLDMEMTG…ADIYESIDEL (164 aa)). Tyrosine 129 is a catalytic residue.

Belongs to the oligoribonuclease family.

Its subcellular location is the cytoplasm. Its function is as follows. 3'-to-5' exoribonuclease specific for small oligoribonucleotides. This Thiobacillus denitrificans (strain ATCC 25259 / T1) protein is Oligoribonuclease.